We begin with the raw amino-acid sequence, 274 residues long: Large ribosomal subunit protein uL2cz/uL2cy (274 aa).

Positions 224–274 are disordered; sequence NPVDHPHGGGEGRAPIGRKKPATPWGYPALGRRSRKRNKYSDNLILRRRSK.

Belongs to the universal ribosomal protein uL2 family. Part of the 50S ribosomal subunit.

The protein localises to the plastid. The protein resides in the chloroplast. The chain is Large ribosomal subunit protein uL2cz/uL2cy (rpl2-A) from Morus indica (Mulberry).